We begin with the raw amino-acid sequence, 451 residues long: Glycine--tRNA ligase (451 aa).

Residues Arg99 and Glu168 each contribute to the substrate site. ATP-binding positions include 200-202 (RNE), 210-215 (FRTREF), 284-285 (EL), and 328-331 (GLDR). 215–219 (FEQME) lines the substrate pocket. 324–328 (EPSVG) lines the substrate pocket.

This sequence belongs to the class-II aminoacyl-tRNA synthetase family. Homodimer.

It is found in the cytoplasm. It catalyses the reaction tRNA(Gly) + glycine + ATP = glycyl-tRNA(Gly) + AMP + diphosphate. In terms of biological role, catalyzes the attachment of glycine to tRNA(Gly). This Mycoplasmopsis synoviae (strain 53) (Mycoplasma synoviae) protein is Glycine--tRNA ligase.